We begin with the raw amino-acid sequence, 145 residues long: 3-dehydroquinate dehydratase (145 aa).

Tyr24 (proton acceptor) is an active-site residue. Residues Asn75, His81, and Asp88 each contribute to the substrate site. The active-site Proton donor is the His101. Substrate contacts are provided by residues 102–103 and Arg112; that span reads IS.

Belongs to the type-II 3-dehydroquinase family. As to quaternary structure, homododecamer.

It catalyses the reaction 3-dehydroquinate = 3-dehydroshikimate + H2O. It functions in the pathway metabolic intermediate biosynthesis; chorismate biosynthesis; chorismate from D-erythrose 4-phosphate and phosphoenolpyruvate: step 3/7. Functionally, catalyzes a trans-dehydration via an enolate intermediate. This is 3-dehydroquinate dehydratase (aroQ) from Corynebacterium glutamicum (strain ATCC 13032 / DSM 20300 / JCM 1318 / BCRC 11384 / CCUG 27702 / LMG 3730 / NBRC 12168 / NCIMB 10025 / NRRL B-2784 / 534).